Here is a 243-residue protein sequence, read N- to C-terminus: Myrosinase MB2 (243 aa).

Residue asparagine 30 is glycosylated (N-linked (GlcNAc...) asparagine). Tyrosine 51 is a substrate binding site. The active-site Nucleophile is glutamate 125. Residues tryptophan 173 and 180–181 (EF) each bind substrate. Asparagine 216 is a glycosylation site (N-linked (GlcNAc...) asparagine).

This sequence belongs to the glycosyl hydrolase 1 family. In terms of assembly, homodimer. As to expression, in vacuoles called myrosin grains of a certain class of cells, myrosin cells, distributed in the cotyledons and the axis of the embryo as well as in different organs of the growing plant.

Its subcellular location is the vacuole. The enzyme catalyses a thioglucoside + H2O = a sugar + a thiol.. Its function is as follows. Degradation of glucosinolates (glucose residue linked by a thioglucoside bound to an amino acid derivative) to glucose, sulfate and any of the products: thiocyanates, isothiocyanates, nitriles, epithionitriles or oxazolidine-2-thiones. The sequence is that of Myrosinase MB2 from Sinapis alba (White mustard).